We begin with the raw amino-acid sequence, 518 residues long: Integrator complex subunit 14 (518 aa).

Residues 2–204 enclose the VWFA domain; that stretch reads PTVVVMDVSL…KNVQSMFGKL (203 aa). The Mg(2+) site is built by serine 10, serine 12, and threonine 86. Lysine 418 bears the N6-acetyllysine mark.

The protein belongs to the Integrator subunit 14 family. In terms of assembly, component of the Integrator complex, composed of core subunits INTS1, INTS2, INTS3, INTS4, INTS5, INTS6, INTS7, INTS8, INTS9/RC74, INTS10, INTS11/CPSF3L, INTS12, INTS13, INTS14 and INTS15. The core complex associates with protein phosphatase 2A subunits PPP2CA and PPP2R1A, to form the Integrator-PP2A (INTAC) complex. INTS14 is part of the tail subcomplex, composed of INTS10, INTS13, INTS14 and INTS15. Strongly expressed in numerous cancer cells compared with their non-cancerous counterparts (lung, prostate, colon, stomach and skin).

Its subcellular location is the nucleus. In terms of biological role, component of the integrator complex, a multiprotein complex that terminates RNA polymerase II (Pol II) transcription in the promoter-proximal region of genes. The integrator complex provides a quality checkpoint during transcription elongation by driving premature transcription termination of transcripts that are unfavorably configured for transcriptional elongation: the complex terminates transcription by (1) catalyzing dephosphorylation of the C-terminal domain (CTD) of Pol II subunit POLR2A/RPB1 and SUPT5H/SPT5, (2) degrading the exiting nascent RNA transcript via endonuclease activity and (3) promoting the release of Pol II from bound DNA. The integrator complex is also involved in terminating the synthesis of non-coding Pol II transcripts, such as enhancer RNAs (eRNAs), small nuclear RNAs (snRNAs), telomerase RNAs and long non-coding RNAs (lncRNAs). Within the integrator complex, INTS14 is part of the integrator tail module that acts as a platform for the recruitment of transcription factors at promoters. This chain is Integrator complex subunit 14, found in Homo sapiens (Human).